We begin with the raw amino-acid sequence, 283 residues long: Pantothenate synthetase (283 aa).

30 to 37 lines the ATP pocket; sequence MGNLHQGH. The active-site Proton donor is the His-37. Gln-61 is a binding site for (R)-pantoate. Gln-61 contributes to the beta-alanine binding site. 149-152 contacts ATP; it reads GEKD. A (R)-pantoate-binding site is contributed by Gln-155. Residues Val-178 and 186-189 contribute to the ATP site; that span reads FSSR.

The protein belongs to the pantothenate synthetase family. In terms of assembly, homodimer.

The protein localises to the cytoplasm. It catalyses the reaction (R)-pantoate + beta-alanine + ATP = (R)-pantothenate + AMP + diphosphate + H(+). Its pathway is cofactor biosynthesis; (R)-pantothenate biosynthesis; (R)-pantothenate from (R)-pantoate and beta-alanine: step 1/1. Its function is as follows. Catalyzes the condensation of pantoate with beta-alanine in an ATP-dependent reaction via a pantoyl-adenylate intermediate. This chain is Pantothenate synthetase, found in Proteus mirabilis (strain HI4320).